We begin with the raw amino-acid sequence, 644 residues long: Zinc transporter ZIP4 (644 aa).

Positions 1 to 27 (MAILAWLEPRPLLAVLVLVLTMRMAQP) are cleaved as a signal peptide. At 28–323 (AHLLTLLSSG…QNQLSQAEKY (296 aa)) the chain is on the extracellular side. 3 cysteine pairs are disulfide-bonded: Cys59–Cys64, Cys67–Cys103, and Cys153–Cys188. The tract at residues 231–259 (TETHSDHHHQEKRVNRQGPTPLTAPNSSS) is disordered. Basic and acidic residues predominate over residues 233-244 (THSDHHHQEKRV). A compositionally biased stretch (polar residues) spans 247 to 259 (QGPTPLTAPNSSS). Cys266 and Cys305 are disulfide-bonded. The chain crosses the membrane as a helical span at residues 324–344 (LYGSLATLLICLCSTFGLLLL). At 345-355 (TCAACSTAAHY) the chain is on the cytoplasmic side. A helical transmembrane segment spans residues 356–376 (VIQTFLGMAVGALTGDALLHL). The Extracellular portion of the chain corresponds to 377 to 404 (TPKVLGLHQHGGDSEHRADSHGPQTTWR). The chain crosses the membrane as a helical span at residues 405–425 (LVVALSGLYVFFLFEKLCDLL). Residues 426-495 (LPQDPEDRKG…KSPELRLLPY (70 aa)) are Cytoplasmic-facing. Positions 449–451 (LQL) match the Essential for SLC39A4 endocytosis motif. Residues 456-467 (LRPPKQPHEGSR) are compositionally biased toward basic and acidic residues. The tract at residues 456–484 (LRPPKQPHEGSRADLVAEESPELLSPEPR) is disordered. The helical transmembrane segment at 496–515 (MITLGDGLHNFADGLAVGAA) threads the bilayer. 3 residues coordinate Zn(2+): His504, Asn505, and Asp508. Residues 516 to 523 (FASSWKTG) are Extracellular-facing. The helical transmembrane segment at 524-550 (LATSLAVFCHEVPHELGDFAALLHAGL) threads the bilayer. 3 residues coordinate Zn(2+): His533, Glu534, and His537. At 551–555 (PVSRA) the chain is on the cytoplasmic side. The helical transmembrane segment at 556-576 (LLLNLASGLTAFAGLYVALAL) threads the bilayer. The Extracellular segment spans residues 577–583 (GVGEESE). Residues 584–604 (SWTLAVAIGLFLYVALCDMLP) form a helical membrane-spanning segment. The Cytoplasmic portion of the chain corresponds to 605–614 (AMLNVRDPRP). The helical transmembrane segment at 615-635 (WLLFLLHNVGLLGGWAVLLLL) threads the bilayer. Residues 636 to 644 (SLYEDSIAL) lie on the Extracellular side of the membrane.

Belongs to the ZIP transporter (TC 2.A.5) family. Homodimer. Post-translationally, the extracellular N-terminal ectodomain is cleaved when cells are Zn(2+) deficient, N-terminally cleaved SLC39A4 is internalized at a faster rate. Under excess Zn(2+) conditions, SLC39A4 on the cell surface is rapidly endocytosed, ubiquitinated and degraded. In terms of processing, glycosylated.

The protein resides in the cell membrane. It is found in the recycling endosome membrane. It localises to the apical cell membrane. The catalysed reaction is Zn(2+)(in) = Zn(2+)(out). In terms of biological role, selective transporter that mediates the uptake of Zn(2+). Plays an essential role for dietary zinc uptake from small intestine. The Zn(2+) uniporter activity is regulated by zinc availability. Also exhibits polyspecific binding and transport of Cu(2+), Cd(2+) and possibly Ni(2+) but at higher concentrations. This Pteropus alecto (Black flying fox) protein is Zinc transporter ZIP4.